Reading from the N-terminus, the 384-residue chain is S-adenosylmethionine synthase (384 aa).

His15 serves as a coordination point for ATP. Residue Asp17 coordinates Mg(2+). Residue Glu43 participates in K(+) binding. 2 residues coordinate L-methionine: Glu56 and Gln99. The segment at 99–109 is flexible loop; that stretch reads QSPDINQGVDR. Residues 164 to 166, 230 to 231, Asp239, 245 to 246, Ala262, and Lys266 each bind ATP; these read DAK, RF, and RK. An L-methionine-binding site is contributed by Asp239. Lys270 is an L-methionine binding site.

It belongs to the AdoMet synthase family. As to quaternary structure, homotetramer; dimer of dimers. It depends on Mg(2+) as a cofactor. K(+) serves as cofactor.

It is found in the cytoplasm. It carries out the reaction L-methionine + ATP + H2O = S-adenosyl-L-methionine + phosphate + diphosphate. It functions in the pathway amino-acid biosynthesis; S-adenosyl-L-methionine biosynthesis; S-adenosyl-L-methionine from L-methionine: step 1/1. Its function is as follows. Catalyzes the formation of S-adenosylmethionine (AdoMet) from methionine and ATP. The overall synthetic reaction is composed of two sequential steps, AdoMet formation and the subsequent tripolyphosphate hydrolysis which occurs prior to release of AdoMet from the enzyme. This Enterobacter sp. (strain 638) protein is S-adenosylmethionine synthase.